We begin with the raw amino-acid sequence, 658 residues long: Endoglucanase 3 (658 aa).

The first 23 residues, 1-23, serve as a signal peptide directing secretion; the sequence is MQLKNFYPKMSVLGIATVMALTA. The N-palmitoyl cysteine moiety is linked to residue C24. C24 carries the S-diacylglycerol cysteine lipid modification. A propeptide spanning residues 24–265 is cleaved from the precursor; the sequence is CGDENTQALF…TDSLFIDNIY (242 aa). Positions 42 to 83 are disordered; that stretch reads ENQVPVSSSDMSPTSSDAVIDPTSSSAAVVDPSTLPAEGPIT. Over residues 45–58 the composition is skewed to low complexity; it reads VPVSSSDMSPTSSD. The CBM11 domain occupies 87–277; the sequence is GLGTLVDDFE…DSSEVEKDQP (191 aa). Residue E448 is the Proton donor of the active site. E597 functions as the Nucleophile in the catalytic mechanism.

The protein belongs to the glycosyl hydrolase 5 (cellulase A) family. Monomer. In terms of processing, may be a lipoprotein and may be glycosylated.

The protein localises to the membrane. It carries out the reaction Endohydrolysis of (1-&gt;4)-beta-D-glucosidic linkages in cellulose, lichenin and cereal beta-D-glucans.. Exhibits both endoglucanase and cellobiosidase activities. The chain is Endoglucanase 3 (cel-3) from Fibrobacter succinogenes (strain ATCC 19169 / S85).